Consider the following 103-residue polypeptide: Large ribosomal subunit protein bL21 (103 aa).

Belongs to the bacterial ribosomal protein bL21 family. In terms of assembly, part of the 50S ribosomal subunit. Contacts protein L20.

Its function is as follows. This protein binds to 23S rRNA in the presence of protein L20. The polypeptide is Large ribosomal subunit protein bL21 (Actinobacillus pleuropneumoniae serotype 5b (strain L20)).